A 180-amino-acid chain; its full sequence is Large ribosomal subunit protein uL5 (180 aa).

This sequence belongs to the universal ribosomal protein uL5 family. In terms of assembly, part of the 50S ribosomal subunit; part of the 5S rRNA/L5/L18/L25 subcomplex. Contacts the 5S rRNA and the P site tRNA. Forms a bridge to the 30S subunit in the 70S ribosome.

Functionally, this is one of the proteins that bind and probably mediate the attachment of the 5S RNA into the large ribosomal subunit, where it forms part of the central protuberance. In the 70S ribosome it contacts protein S13 of the 30S subunit (bridge B1b), connecting the 2 subunits; this bridge is implicated in subunit movement. Contacts the P site tRNA; the 5S rRNA and some of its associated proteins might help stabilize positioning of ribosome-bound tRNAs. This is Large ribosomal subunit protein uL5 from Cupriavidus necator (strain ATCC 17699 / DSM 428 / KCTC 22496 / NCIMB 10442 / H16 / Stanier 337) (Ralstonia eutropha).